The sequence spans 449 residues: NADP-specific glutamate dehydrogenase (449 aa).

Substrate-binding residues include Lys-92, Gln-113, and Lys-116. The Proton donor role is filled by Lys-128. Gly-167 contacts substrate. Residues Thr-211 and Asn-242 each coordinate NADP(+). Ser-380 contacts substrate.

The protein belongs to the Glu/Leu/Phe/Val dehydrogenases family. As to quaternary structure, homohexamer.

It catalyses the reaction L-glutamate + NADP(+) + H2O = 2-oxoglutarate + NH4(+) + NADPH + H(+). In terms of biological role, catalyzes the reversible oxidative deamination of glutamate to alpha-ketoglutarate and ammonia. The chain is NADP-specific glutamate dehydrogenase (gdhA) from Haemophilus influenzae (strain ATCC 51907 / DSM 11121 / KW20 / Rd).